The sequence spans 182 residues: Ribosome-recycling factor (182 aa).

Belongs to the RRF family.

The protein resides in the cytoplasm. Functionally, responsible for the release of ribosomes from messenger RNA at the termination of protein biosynthesis. May increase the efficiency of translation by recycling ribosomes from one round of translation to another. This is Ribosome-recycling factor from Prochlorococcus marinus subsp. pastoris (strain CCMP1986 / NIES-2087 / MED4).